A 323-amino-acid chain; its full sequence is Mycothiol acetyltransferase (323 aa).

E44 contacts 1D-myo-inositol 2-(L-cysteinylamino)-2-deoxy-alpha-D-glucopyranoside. 2 consecutive N-acetyltransferase domains span residues 77–176 (GQDL…VSLR) and 173–323 (VSLR…VKEG). 98-100 (IAV) lines the acetyl-CoA pocket. Positions 200, 240, and 253 each coordinate 1D-myo-inositol 2-(L-cysteinylamino)-2-deoxy-alpha-D-glucopyranoside. Acetyl-CoA-binding positions include 257–259 (VGV) and 264–270 (QGSGLGK). Y291 contacts 1D-myo-inositol 2-(L-cysteinylamino)-2-deoxy-alpha-D-glucopyranoside.

Belongs to the acetyltransferase family. MshD subfamily. Monomer.

The catalysed reaction is 1D-myo-inositol 2-(L-cysteinylamino)-2-deoxy-alpha-D-glucopyranoside + acetyl-CoA = mycothiol + CoA + H(+). In terms of biological role, catalyzes the transfer of acetyl from acetyl-CoA to desacetylmycothiol (Cys-GlcN-Ins) to form mycothiol. This chain is Mycothiol acetyltransferase, found in Pseudarthrobacter chlorophenolicus (strain ATCC 700700 / DSM 12829 / CIP 107037 / JCM 12360 / KCTC 9906 / NCIMB 13794 / A6) (Arthrobacter chlorophenolicus).